The primary structure comprises 354 residues: 3-dehydroquinate synthase (354 aa).

NAD(+) is bound by residues 100-104 (GATGD), 124-125 (TT), Lys136, Lys145, and 163-166 (FLKT). Zn(2+)-binding residues include Glu178, His242, and His256.

It belongs to the sugar phosphate cyclases superfamily. Dehydroquinate synthase family. Requires NAD(+) as cofactor. Co(2+) is required as a cofactor. It depends on Zn(2+) as a cofactor.

Its subcellular location is the cytoplasm. The enzyme catalyses 7-phospho-2-dehydro-3-deoxy-D-arabino-heptonate = 3-dehydroquinate + phosphate. The protein operates within metabolic intermediate biosynthesis; chorismate biosynthesis; chorismate from D-erythrose 4-phosphate and phosphoenolpyruvate: step 2/7. In terms of biological role, catalyzes the conversion of 3-deoxy-D-arabino-heptulosonate 7-phosphate (DAHP) to dehydroquinate (DHQ). This chain is 3-dehydroquinate synthase, found in Staphylococcus aureus (strain MSSA476).